Reading from the N-terminus, the 123-residue chain is Holo-[acyl-carrier-protein] synthase (123 aa).

2 residues coordinate Mg(2+): Asp8 and Glu56.

This sequence belongs to the P-Pant transferase superfamily. AcpS family. Requires Mg(2+) as cofactor.

It localises to the cytoplasm. The catalysed reaction is apo-[ACP] + CoA = holo-[ACP] + adenosine 3',5'-bisphosphate + H(+). In terms of biological role, transfers the 4'-phosphopantetheine moiety from coenzyme A to a Ser of acyl-carrier-protein. This chain is Holo-[acyl-carrier-protein] synthase, found in Clostridium beijerinckii (strain ATCC 51743 / NCIMB 8052) (Clostridium acetobutylicum).